A 252-amino-acid chain; its full sequence is AA9 family lytic polysaccharide monooxygenase B (252 aa).

The signal sequence occupies residues 1–20; the sequence is MVSFTKTFFAIVACALGVQA. The Cu(2+) site is built by histidine 21 and histidine 106. Cysteines 72 and 198 form a disulfide. Asparagine 158 carries N-linked (GlcNAc...) asparagine glycosylation. 2 residues coordinate O2: histidine 184 and glutamine 193. Tyrosine 195 contributes to the Cu(2+) binding site. A glycan (N-linked (GlcNAc...) asparagine) is linked at asparagine 237.

It belongs to the polysaccharide monooxygenase AA9 family. Requires Cu(2+) as cofactor.

The protein localises to the secreted. It catalyses the reaction [(1-&gt;4)-beta-D-glucosyl]n+m + reduced acceptor + O2 = 4-dehydro-beta-D-glucosyl-[(1-&gt;4)-beta-D-glucosyl]n-1 + [(1-&gt;4)-beta-D-glucosyl]m + acceptor + H2O.. In terms of biological role, lytic polysaccharide monooxygenase (LPMO) that depolymerizes crystalline and amorphous polysaccharides via the oxidation of scissile alpha- or beta-(1-4)-glycosidic bonds, yielding C1 or C4 oxidation products. Catalysis by LPMOs requires the reduction of the active-site copper from Cu(II) to Cu(I) by a reducing agent and H(2)O(2) or O(2) as a cosubstrate. The synergistic activity of LPMO9B with xylanase Xyl10G or cellulase Cel5B shows efficient bioconversion rates of 56 and 174 percent in pretreated kenaf (Hibiscus cannabinus) and oak, respectively. The sequence is that of AA9 family lytic polysaccharide monooxygenase B from Gloeophyllum trabeum (strain ATCC 11539 / FP-39264 / Madison 617) (Brown rot fungus).